Reading from the N-terminus, the 1693-residue chain is MVLQGAKQRLCSSKNLDTCVLTPKYQTAYACEGKKLTIECEQGELINLIRANYGRFSITICNDHGNVEWSVNCMFPKSLTVLNSRCAHKNSCSVLAATSMFGDPCPGTHKYLEAHYQCVSAAQTSTTTNRPSPPPWVLNNGPPIFGNGSGLIHPTNIGGGSGGASAPPRLPTLPGVVGINGNGGMFNVPPPATHATPPGSTATLPGGRLKGVATSTTTTKHPAGRRDGLPPPPQLHHHHNHHTDETTPTKPSGKVPAASNATAPSNTRILTGVGGGGTDDGTLLTTKSSPNRTPGTAASGPSVSSNGSAVRTINNINLNAAGMAGADDETKLFCGPTHARNLFWNMTRVGDVNVQPCPGGAAGIAKWRCVLMKRMPDSSFDEDDEEMAGTSTTTPMSTSGDCLHNSSSCEPPVTMAHKVNQRLRNFEPTWHPLTPDLTQCRSLWLNNLEMRVNQRDSSLISIANDMSEVTSSKTLYGGDMLVTTKIIQTVSEKMLHDKETFPDQRQREAMIMELLHCVVKTGSNLLDESQLSSWLDLNPEDQMRVATSLLTGLEYNAFLLADTIIRERSVVQKVKNILLSVRVLETKTIQSSVVFPDSDQWPISSDRIELPRAALIENSEGGLVRIVFAAFDRLESILKPSYDHFDLKSSRSYVRNTAILTNDSDASAGDLQQRLRILNSKVISASLGKGRHIQLSQPITLTLKHLKTENVTNPTCVFWNYIDHAWSANGCSLESTNRTHSVCSCNHLTNFAILMDVVDEHQHSLFTMFDGNMRIFIYISIAICVVFIVIALLTLKLFNGVFVKSARTSIYINIYICLLAIELLFLLGIEQTETSIFCGFITVFLHCAILSGTSWFCYEAFHSYSTLTSDELLLEVDQTPKVNCYYLLSYGLSLSVVAISLVINPSTYTQNDYCVLMEANAVFYATFVAPVLIFFMAAIGYTFLSWIIMCRKSRTGLKTKEHTRLATVRFDIRCSFVFFLLLSAVWCSAYFYLRGAKMDEDVTGIYGYNFICFNTLLGLYIFVFHCIQNEKIRREYRKYVRQHAWLPKCLRCSKTSISSGIVAGGGTGLGGTNAGTLCSVSTAKKSKLPLGTNDDAHDEQQQQQHMSATEDAIMGASSDCELNEAQQRRTLKSGLITGTLQPSQSLGGHVVLERGNTLRSTGHASPTSSAGSTHLIFAHKQQQQQPPLGEAYYHQPDYYSWKQTAGGMKAQREYYNNAGAATSSPQQAHEVFYWTQKPNSQHGKKKRGGVGAIPASPSGSLHSRATAASQVLFYPSYKKTKPGQQAHPHYAEALDPPQPPNTAAYYQQQQQLRQQRQQQQQQLSSDEEQAEQHAHLLHLQHQQQQQQQRRAGGQQQLPAPPPHMAQYQQEFMQRQYRNKHSNCDLGDAYYNQGSVGGADGGPVYEEILSNRNSDAQHYEVGDFDVDEVYNNSVGTGVFNNMRAAVAAGGSRYGGSLSGGSVSSRNQQQQQHSLAQPISARRCTADEDDDEDEDDEETTAAEQLHDGVCDEEEEDEESDMEDDSHGLPPQSAERMRRLMALQDEDFKRRFQRQQRKHGAPVDYGTLPPGSAQAVIGGAHPEHNGAVFGVSGGVGEGSMRGALRQQHAKSPSARLAVNELFGHGNTGPPLPPANQTPAQKRQQLQKLSPQSTTSSSSHTSHSNPHSHPPHHQQRHLSAMLDENNTVRCYLEPLAK.

The Extracellular portion of the chain corresponds to 1–774 (MVLQGAKQRL…LFTMFDGNMR (774 aa)). The SUEL-type lectin domain maps to 30 to 119 (ACEGKKLTIE…KYLEAHYQCV (90 aa)). Asn-147, Asn-260, Asn-306, and Asn-345 each carry an N-linked (GlcNAc...) asparagine glycan. The disordered stretch occupies residues 190–309 (PPATHATPPG…GPSVSSNGSA (120 aa)). Polar residues-rich tracts occupy residues 259–269 (SNATAPSNTRI) and 287–309 (KSSP…NGSA). A disordered region spans residues 379 to 406 (SFDEDDEEMAGTSTTTPMSTSGDCLHNS). Residues 390 to 399 (TSTTTPMSTS) show a composition bias toward low complexity. N-linked (GlcNAc...) asparagine glycans are attached at residues Asn-405, Asn-662, Asn-710, and Asn-737. A GAIN-B domain is found at 568 to 761 (RSVVQKVKNI…AILMDVVDEH (194 aa)). Intrachain disulfides connect Cys-716-Cys-743 and Cys-731-Cys-745. A GPS region spans residues 716 to 761 (CVFWNYIDHAWSANGCSLESTNRTHSVCSCNHLTNFAILMDVVDEH). A helical membrane pass occupies residues 775-795 (IFIYISIAICVVFIVIALLTL). Over 796-808 (KLFNGVFVKSART) the chain is Cytoplasmic. A helical membrane pass occupies residues 809–829 (SIYINIYICLLAIELLFLLGI). Topologically, residues 830-835 (EQTETS) are extracellular. The helical transmembrane segment at 836–856 (IFCGFITVFLHCAILSGTSWF) threads the bilayer. At 857–882 (CYEAFHSYSTLTSDELLLEVDQTPKV) the chain is on the cytoplasmic side. Residues 883 to 903 (NCYYLLSYGLSLSVVAISLVI) form a helical membrane-spanning segment. The Extracellular segment spans residues 904-927 (NPSTYTQNDYCVLMEANAVFYATF). Residues 928–948 (VAPVLIFFMAAIGYTFLSWII) traverse the membrane as a helical segment. At 949–975 (MCRKSRTGLKTKEHTRLATVRFDIRCS) the chain is on the cytoplasmic side. A helical membrane pass occupies residues 976 to 996 (FVFFLLLSAVWCSAYFYLRGA). Topologically, residues 997-1003 (KMDEDVT) are extracellular. Residues 1004–1024 (GIYGYNFICFNTLLGLYIFVF) form a helical membrane-spanning segment. The Cytoplasmic segment spans residues 1025-1693 (HCIQNEKIRR…VRCYLEPLAK (669 aa)). Positions 1089-1109 (PLGTNDDAHDEQQQQQHMSAT) are disordered. A phosphoserine mark is found at Ser-1165, Ser-1256, and Ser-1263. Disordered regions lie at residues 1237–1264 (KPNS…LHSR), 1279–1362 (KTKP…APPP), 1450–1529 (SRYG…LPPQ), and 1596–1678 (SMRG…SAML). A compositionally biased stretch (low complexity) spans 1307–1323 (QQQQQLRQQRQQQQQQL). A phosphoserine mark is found at Ser-1324 and Ser-1325. Positions 1337–1357 (LHLQHQQQQQQQRRAGGQQQL) are enriched in low complexity. Residues 1464–1475 (RNQQQQQHSLAQ) show a composition bias toward polar residues. Composition is skewed to acidic residues over residues 1485 to 1498 (DEDD…EETT) and 1508 to 1521 (CDEE…DMED). Residues 1640–1663 (QQLQKLSPQSTTSSSSHTSHSNPH) are compositionally biased toward low complexity.

Belongs to the G-protein coupled receptor 2 family. LN-TM7 subfamily. Forms a heterodimer, consisting of a large extracellular region non-covalently linked to a seven-transmembrane moiety. Post-translationally, proteolytically cleaved into 2 subunits, an extracellular subunit and a seven-transmembrane subunit.

The protein localises to the cell membrane. The polypeptide is Latrophilin Cirl (Drosophila pseudoobscura pseudoobscura (Fruit fly)).